The chain runs to 367 residues: B2 bradykinin receptor (367 aa).

The Extracellular portion of the chain corresponds to 1-36 (MLNITSQVLAPALNGSVSQSSGCPNTEWSGWLNVIQ). 2 N-linked (GlcNAc...) asparagine glycosylation sites follow: Asn3 and Asn14. A helical transmembrane segment spans residues 37-60 (APFLWVLFVLATLENLFVLSVFCL). Topologically, residues 61–69 (HKSSCTVAE) are cytoplasmic. A helical membrane pass occupies residues 70 to 94 (VYLGNLAAADLILACGLPFWAVTIA). The Extracellular segment spans residues 95 to 107 (NHFDWLFGEALCR). Cys106 and Cys187 are joined by a disulfide. A helical membrane pass occupies residues 108 to 129 (VVNTMIYMNLYSSICFLMLVSI). Residues 130 to 151 (DRYLALVKTMSIGRMRRVRWAK) are Cytoplasmic-facing. Residue Tyr132 is modified to Phosphotyrosine. A helical membrane pass occupies residues 152–174 (LYSLVIWGCTLLLSSPMLVFRTM). Residues 175–197 (KDYRDEGYNVTACIIDYPSRSWE) are Extracellular-facing. The N-linked (GlcNAc...) asparagine glycan is linked to Asn183. Residues 198-224 (VFTNVLLNLVGFLLPLSVITFCTVQIL) form a helical membrane-spanning segment. Residues 225-243 (QVLRNNEMQKFKEIQTERR) lie on the Cytoplasmic side of the membrane. Residues 244 to 268 (ATVLVLAVLLLFVVCWLPFQVSTFL) form a helical membrane-spanning segment. Topologically, residues 269 to 287 (DTLLKLGVLSSCWDEHVID) are extracellular. Residues 288–311 (VITQVGSFMGYSNSCLNPLVYVIV) form a helical membrane-spanning segment. The Cytoplasmic segment spans residues 312-367 (GKRFRKKSREVYRAACPKAGCVLEPVQAESSMGTLRTSISVERQIHKLPEWTRSSQ). Residue Tyr323 is modified to Phosphotyrosine. Cys327 carries S-palmitoyl cysteine lipidation. Position 342 is a phosphoserine (Ser342). The residue at position 345 (Thr345) is a Phosphothreonine. A phosphoserine; by GRK6 mark is found at Ser349 and Ser351.

The protein belongs to the G-protein coupled receptor 1 family. Bradykinin receptor subfamily. BDKRB2 sub-subfamily. Forms a complex with PECAM1 and GNAQ. Interacts with PECAM1.

It is found in the cell membrane. In terms of biological role, receptor for bradykinin. It is associated with G proteins that activate a phosphatidylinositol-calcium second messenger system. This chain is B2 bradykinin receptor (BDKRB2), found in Oryctolagus cuniculus (Rabbit).